The chain runs to 414 residues: Ribulose bisphosphate carboxylase/oxygenase activase (414 aa).

37-44 contacts ATP; sequence GRKGEGKT. A disordered region spans residues 296-326; it reads RGYQTAPPPEAPVIQPVNNSSHKQKTSNTHL. Over residues 311-326 the composition is skewed to polar residues; that stretch reads PVNNSSHKQKTSNTHL.

The protein belongs to the RuBisCO activase family.

Its function is as follows. Activation of RuBisCO (ribulose-1,5-bisohosphate carboxylase/oxygenase; EC 4.1.1.39) involves the ATP-dependent carboxylation of the epsilon-amino group of lysine leading to a carbamate structure. This is Ribulose bisphosphate carboxylase/oxygenase activase (rca) from Nostoc sp. (strain PCC 7120 / SAG 25.82 / UTEX 2576).